Here is a 940-residue protein sequence, read N- to C-terminus: Beta-mannosidase A (940 aa).

The signal sequence occupies residues 1–21 (MHFHGIATQAVLASNITTGSG). Residues Asn-15, Asn-39, Asn-79, Asn-245, Asn-314, Asn-321, and Asn-344 are each glycosylated (N-linked (GlcNAc...) asparagine). Glu-476 serves as the catalytic Proton donor. Residues Asn-534, Asn-605, Asn-626, Asn-653, Asn-733, Asn-761, and Asn-785 are each glycosylated (N-linked (GlcNAc...) asparagine).

It belongs to the glycosyl hydrolase 2 family. Beta-mannosidase A subfamily. As to quaternary structure, homodimer.

The protein localises to the secreted. The enzyme catalyses Hydrolysis of terminal, non-reducing beta-D-mannose residues in beta-D-mannosides.. The protein operates within glycan metabolism; N-glycan degradation. Exoglycosidase that cleaves the single beta-linked mannose residue from the non-reducing end of beta-mannosidic oligosaccharides of various complexity and length. Involved in the degradation of polymeric mannan and galactomannan. The protein is Beta-mannosidase A (mndA) of Emericella nidulans (strain FGSC A4 / ATCC 38163 / CBS 112.46 / NRRL 194 / M139) (Aspergillus nidulans).